Consider the following 118-residue polypeptide: UPF0102 protein STH1475 (118 aa).

The protein belongs to the UPF0102 family.

The chain is UPF0102 protein STH1475 from Symbiobacterium thermophilum (strain DSM 24528 / JCM 14929 / IAM 14863 / T).